Consider the following 195-residue polypeptide: dCTP deaminase (195 aa).

Residues 109 to 114, aspartate 127, 135 to 137, tyrosine 170, lysine 177, and glutamine 181 contribute to the dCTP site; these read RSSLAR and TLE. Catalysis depends on glutamate 137, which acts as the Proton donor/acceptor.

Belongs to the dCTP deaminase family. As to quaternary structure, homotrimer.

The catalysed reaction is dCTP + H2O + H(+) = dUTP + NH4(+). Its pathway is pyrimidine metabolism; dUMP biosynthesis; dUMP from dCTP (dUTP route): step 1/2. Catalyzes the deamination of dCTP to dUTP. The polypeptide is dCTP deaminase (Rhodospirillum rubrum (strain ATCC 11170 / ATH 1.1.1 / DSM 467 / LMG 4362 / NCIMB 8255 / S1)).